Consider the following 148-residue polypeptide: UPF0134 protein MPN_204 (148 aa).

This sequence belongs to the UPF0134 family.

This chain is UPF0134 protein MPN_204, found in Mycoplasma pneumoniae (strain ATCC 29342 / M129 / Subtype 1) (Mycoplasmoides pneumoniae).